We begin with the raw amino-acid sequence, 266 residues long: Undecaprenyl-diphosphatase (266 aa).

The next 7 helical transmembrane spans lie at 41–61, 82–102, 106–126, 140–160, 180–200, 213–233, and 245–265; these read NLAF…VILW, YVIN…FFKD, AIFG…AALL, ISMK…LPGL, LAQF…LLDG, IPTL…CLAC, and LIYF…VSQL.

It belongs to the UppP family.

The protein resides in the cell inner membrane. It carries out the reaction di-trans,octa-cis-undecaprenyl diphosphate + H2O = di-trans,octa-cis-undecaprenyl phosphate + phosphate + H(+). Its function is as follows. Catalyzes the dephosphorylation of undecaprenyl diphosphate (UPP). Confers resistance to bacitracin. This Bacteroides fragilis (strain ATCC 25285 / DSM 2151 / CCUG 4856 / JCM 11019 / LMG 10263 / NCTC 9343 / Onslow / VPI 2553 / EN-2) protein is Undecaprenyl-diphosphatase.